The chain runs to 242 residues: Pyridoxine 5'-phosphate synthase (242 aa).

Asn-9 contributes to the 3-amino-2-oxopropyl phosphate binding site. Residue 11–12 coordinates 1-deoxy-D-xylulose 5-phosphate; that stretch reads DH. Arg-20 is a binding site for 3-amino-2-oxopropyl phosphate. His-45 functions as the Proton acceptor in the catalytic mechanism. 1-deoxy-D-xylulose 5-phosphate is bound by residues Arg-47 and His-52. Glu-72 acts as the Proton acceptor in catalysis. Position 102 (Thr-102) interacts with 1-deoxy-D-xylulose 5-phosphate. The active-site Proton donor is His-193. Residues Gly-194 and 215 to 216 contribute to the 3-amino-2-oxopropyl phosphate site; that span reads GH.

The protein belongs to the PNP synthase family. As to quaternary structure, homooctamer; tetramer of dimers.

It localises to the cytoplasm. The catalysed reaction is 3-amino-2-oxopropyl phosphate + 1-deoxy-D-xylulose 5-phosphate = pyridoxine 5'-phosphate + phosphate + 2 H2O + H(+). Its pathway is cofactor biosynthesis; pyridoxine 5'-phosphate biosynthesis; pyridoxine 5'-phosphate from D-erythrose 4-phosphate: step 5/5. In terms of biological role, catalyzes the complicated ring closure reaction between the two acyclic compounds 1-deoxy-D-xylulose-5-phosphate (DXP) and 3-amino-2-oxopropyl phosphate (1-amino-acetone-3-phosphate or AAP) to form pyridoxine 5'-phosphate (PNP) and inorganic phosphate. This is Pyridoxine 5'-phosphate synthase from Idiomarina loihiensis (strain ATCC BAA-735 / DSM 15497 / L2-TR).